The sequence spans 473 residues: FAD-dependent oxidoreductase dpchF (473 aa).

The signal sequence occupies residues 1–21 (MKLSFIASPVWALALAQFAAA). Residues Asn98, Asn128, Asn181, Asn262, and Asn330 are each glycosylated (N-linked (GlcNAc...) asparagine).

The protein belongs to the beta-cyclopiazonate dehydrogenase family. FAD serves as cofactor.

The protein operates within secondary metabolite biosynthesis; terpenoid biosynthesis. Its function is as follows. FAD-dependent oxidoreductase; part of the gene cluster that mediates the biosynthesis of the diterpenoid pyrones higginsianins A and B. The first step of the pathway is the synthesis of the alpha-pyrone moiety by the polyketide synthase dpchA via condensation of one acetyl-CoA starter unit with 3 malonyl-CoA units and 2 methylations. The alpha-pyrone is then combined with geranylgeranyl pyrophosphate (GGPP) formed by the GGPP synthase dpchD through the action of the prenyltransferase dpchC to yield a linear alpha-pyrone diterpenoid. Subsequent steps in the diterpenoid pyrone biosynthetic pathway involve the decalin core formation, which is initiated by the epoxidation of the C10-C11 olefin by the FAD-dependent oxidoreductase dpchE, and is followed by a cyclization cascade catalyzed by the terpene cyclase dpchB. The short chain dehydrogenase/reductase dpchG then oxidizes the 8S hydroxy group to a ketone and the short chain dehydrogenase/reductase dpchH reduces the ketone to the 8R hydroxy group to yield higginsianin B. Finally, the FAD-dependent oxidoreductase dpchF converts higginsianin B into higginsianin A. This is FAD-dependent oxidoreductase dpchF from Colletotrichum higginsianum (strain IMI 349063) (Crucifer anthracnose fungus).